The primary structure comprises 124 residues: Basic leucine zipper transcriptional factor ATF-like (124 aa).

Over residues 1–23 (MAQGSDNNDTSYTKSPSPGNKQG) the composition is skewed to polar residues. A disordered region spans residues 1–60 (MAQGSDNNDTSYTKSPSPGNKQGSSDDMRKVMRREKNRIAAQKSRMRQTQKADSLHLESE). Residues 27-90 (DMRKVMRREK…KYLSTVLSNH (64 aa)) enclose the bZIP domain. The basic motif stretch occupies residues 29-51 (RKVMRREKNRIAAQKSRMRQTQK). The tract at residues 55–83 (LHLESESLEKENAALRKEVKRLTEEAKYL) is leucine-zipper.

This sequence belongs to the bZIP family.

It localises to the nucleus. Its subcellular location is the cytoplasm. Functionally, AP-1 family transcription factor that controls the differentiation of lineage-specific cells in the immune system: specifically mediates the differentiation of T-helper 17 cells (Th17), follicular T-helper cells (TfH), CD8(+) dendritic cells and class-switch recombination (CSR) in B-cells. This is Basic leucine zipper transcriptional factor ATF-like (batf) from Danio rerio (Zebrafish).